The sequence spans 448 residues: Homogentisate 1,2-dioxygenase (448 aa).

Residues His-340, Glu-346, and His-377 each coordinate Fe cation.

Belongs to the homogentisate dioxygenase family. Fe cation serves as cofactor.

The catalysed reaction is homogentisate + O2 = 4-maleylacetoacetate + H(+). The protein operates within amino-acid degradation; L-phenylalanine degradation; acetoacetate and fumarate from L-phenylalanine: step 4/6. The sequence is that of Homogentisate 1,2-dioxygenase (hmgA) from Emericella nidulans (strain FGSC A4 / ATCC 38163 / CBS 112.46 / NRRL 194 / M139) (Aspergillus nidulans).